The primary structure comprises 603 residues: Probable potassium transport system protein Kup (603 aa).

A run of 12 helical transmembrane segments spans residues 15-35, 43-63, 94-114, 136-156, 163-183, 201-221, 244-264, 284-304, 336-356, 367-387, 391-411, and 415-435; these read GLVFGDIGTSPIYTLTVIFLL, VIGVLSLIIWTLITLVTVEYA, AAFITLLAYIGVSFLVGDGVI, IGQGAIMFIAGIIAVALFSVQ, ITWVFGPVMVLWFASLAFSGI, AISFLLHNGFTGFFVLSEVIL, AWRLVFSALVLNYLGQGAFII, IYIPFLILSITATIIASQAMI, IYIGAVNWLLLISVLFMIFEF, GLAVTGTMSITGLMMTLIFYL, MFRSFVSLFVTVIDVVFLLSN, and IPHGGYWSIVIAAIAFSLIII.

This sequence belongs to the HAK/KUP transporter (TC 2.A.72) family.

The protein localises to the cell membrane. It catalyses the reaction K(+)(in) + H(+)(in) = K(+)(out) + H(+)(out). In terms of biological role, transport of potassium into the cell. Likely operates as a K(+):H(+) symporter. The protein is Probable potassium transport system protein Kup of Methanosarcina acetivorans (strain ATCC 35395 / DSM 2834 / JCM 12185 / C2A).